The primary structure comprises 155 residues: Peptide methionine sulfoxide reductase MsrB (155 aa).

In terms of domain architecture, MsrB spans 15 to 137 (REALIATLNA…NSVSLTFIPT (123 aa)). C54, C57, C103, and C106 together coordinate Zn(2+). C126 (nucleophile) is an active-site residue.

The protein belongs to the MsrB Met sulfoxide reductase family. The cofactor is Zn(2+).

It catalyses the reaction L-methionyl-[protein] + [thioredoxin]-disulfide + H2O = L-methionyl-(R)-S-oxide-[protein] + [thioredoxin]-dithiol. This is Peptide methionine sulfoxide reductase MsrB from Xylella fastidiosa (strain M23).